The chain runs to 128 residues: uncharacterized protein (128 aa).

The 69-residue stretch at 6–74 (GSKLQGKITG…KDGKIGLSIK (69 aa)) folds into the S1 motif domain. Residues 72–128 (SIKKAKDRPQARPRNDFRPKESFEQKMNKFLKDSEDRLSSLKRNTESKRGGRGARRG) are disordered. Positions 78–120 (DRPQARPRNDFRPKESFEQKMNKFLKDSEDRLSSLKRNTESKR) are enriched in basic and acidic residues.

The protein belongs to the peptidase U57 family.

This is an uncharacterized protein from Bacillus subtilis (strain 168).